The chain runs to 503 residues: Cytochrome P450 714C1 (503 aa).

The Lumenal segment spans residues 1–6 (MEKLLA). Residues 7–27 (LIVVLVILLSLALFYLCNILW) traverse the membrane as a helical; Signal-anchor for type III membrane protein segment. The Cytoplasmic segment spans residues 28-503 (LRAVKIRKKL…GLPLMVTKLP (476 aa)). Residue Cys450 coordinates heme.

It belongs to the cytochrome P450 family. Heme is required as a cofactor.

It localises to the membrane. Functionally, probably not involved in gibberellin metabolism since over-expression of CYP714C1 in a heterologous system does not induce semi-dwarfism. The protein is Cytochrome P450 714C1 (CYP714C1) of Oryza sativa subsp. japonica (Rice).